Here is a 179-residue protein sequence, read N- to C-terminus: MARLQEYYRSTVVQQLMEQFGYKSVMEVPRIRKITLNMGVGEAVADKKIMDNAVGDMQKIAGQKPVVTKARKSIATFKVRDGYPVGCMVTLRRVRMYEFLDRLVNIAIPRIRDFRGISGRSFDGRGNYNMGIKEQIIFPEIEYDKIDALRGMNITITTTAKTDAEAKALLAAFKFPFKN.

The protein belongs to the universal ribosomal protein uL5 family. As to quaternary structure, part of the 50S ribosomal subunit; part of the 5S rRNA/L5/L18/L25 subcomplex. Contacts the 5S rRNA and the P site tRNA. Forms a bridge to the 30S subunit in the 70S ribosome.

Functionally, this is one of the proteins that bind and probably mediate the attachment of the 5S RNA into the large ribosomal subunit, where it forms part of the central protuberance. In the 70S ribosome it contacts protein S13 of the 30S subunit (bridge B1b), connecting the 2 subunits; this bridge is implicated in subunit movement. Contacts the P site tRNA; the 5S rRNA and some of its associated proteins might help stabilize positioning of ribosome-bound tRNAs. This Nitrosospira multiformis (strain ATCC 25196 / NCIMB 11849 / C 71) protein is Large ribosomal subunit protein uL5.